Here is a 176-residue protein sequence, read N- to C-terminus: ATP-dependent protease subunit HslV (176 aa).

Thr-2 is an active-site residue. The Na(+) site is built by Gly-157, Cys-160, and Thr-163.

This sequence belongs to the peptidase T1B family. HslV subfamily. A double ring-shaped homohexamer of HslV is capped on each side by a ring-shaped HslU homohexamer. The assembly of the HslU/HslV complex is dependent on binding of ATP.

Its subcellular location is the cytoplasm. It carries out the reaction ATP-dependent cleavage of peptide bonds with broad specificity.. With respect to regulation, allosterically activated by HslU binding. Its function is as follows. Protease subunit of a proteasome-like degradation complex believed to be a general protein degrading machinery. In Salmonella gallinarum (strain 287/91 / NCTC 13346), this protein is ATP-dependent protease subunit HslV.